We begin with the raw amino-acid sequence, 437 residues long: uncharacterized protein (437 aa).

The helical transmembrane segment at 47–67 (LLIILIGFILLSSISAIQIDA) threads the bilayer.

It localises to the membrane. This is an uncharacterized protein from Methanocaldococcus jannaschii (strain ATCC 43067 / DSM 2661 / JAL-1 / JCM 10045 / NBRC 100440) (Methanococcus jannaschii).